The sequence spans 124 residues: uncharacterized protein (124 aa).

The N-terminal stretch at 1-22 (MGTSSVLLMIASSLILLEVVMT) is a signal peptide.

This is an uncharacterized protein from Caenorhabditis elegans.